We begin with the raw amino-acid sequence, 480 residues long: Zinc metalloproteinase/disintegrin (480 aa).

An N-terminal signal peptide occupies residues 1 to 20 (MIQVLLITICLAVFPFQGSS). Positions 21-190 (IVLDSGNLNE…KASQLNVSPD (170 aa)) are excised as a propeptide. In terms of domain architecture, Peptidase M12B spans 197–391 (RFIKLAIYVD…HSPQCILNDP (195 aa)). N-linked (GlcNAc...) asparagine glycosylation is found at Asn259 and Asn279. Intrachain disulfides connect Cys308–Cys386, Cys348–Cys370, Cys350–Cys353, Cys413–Cys428, Cys415–Cys423, Cys422–Cys445, Cys436–Cys442, Cys441–Cys466, and Cys454–Cys473. Position 333 (His333) interacts with Zn(2+). Residue Glu334 is part of the active site. His337 and His343 together coordinate Zn(2+). Residues 399–480 (TPVSGNELLE…AGCPRNPFHA (82 aa)) form the Disintegrin domain. The Cell attachment site signature appears at 458–460 (RGD).

The protein belongs to the venom metalloproteinase (M12B) family. P-II subfamily. P-IIa sub-subfamily. Monomer. Requires Zn(2+) as cofactor. Expressed by the venom gland.

Its subcellular location is the secreted. Functionally, impairs hemostasis in the envenomed animal. Its function is as follows. Inhibits platelet aggregation and bone resorption. The protein is Zinc metalloproteinase/disintegrin of Gloydius halys (Chinese water mocassin).